Consider the following 553-residue polypeptide: Arylsulfatase K (553 aa).

The signal sequence occupies residues 1-16 (MLLLLVSVVAALALAA). Residues aspartate 40 and cysteine 80 each contribute to the Ca(2+) site. Cysteine 80 serves as the catalytic Nucleophile. The residue at position 80 (cysteine 80) is a 3-oxoalanine (Cys). N-linked (GlcNAc...) asparagine glycosylation occurs at asparagine 108. Lysine 128 contributes to the substrate binding site. Asparagine 191 is a glycosylation site (N-linked (GlcNAc...) asparagine). Histidine 249 is a substrate binding site. N-linked (GlcNAc...) asparagine glycosylation is present at asparagine 260. Aspartate 311 and histidine 312 together coordinate Ca(2+). Residues asparagine 373, asparagine 411, and asparagine 496 are each glycosylated (N-linked (GlcNAc...) asparagine). The disordered stretch occupies residues 530-553 (SPLASSPTQSTSGSQPTLPQSTSG). Positions 534–553 (SSPTQSTSGSQPTLPQSTSG) are enriched in low complexity.

It belongs to the sulfatase family. It depends on Ca(2+) as a cofactor. The conversion to 3-oxoalanine (also known as C-formylglycine, FGly), of a serine or cysteine residue in prokaryotes and of a cysteine residue in eukaryotes, is critical for catalytic activity. In terms of processing, the 75-kDa precursor undergoes proteolytic processing to yield a 23 kDa form. Post-translationally, N-glycosylated with both high mannose and complex type sugars.

Its subcellular location is the secreted. The protein localises to the lysosome. The catalysed reaction is an aryl sulfate + H2O = a phenol + sulfate + H(+). The enzyme catalyses Hydrolysis of the 2-sulfate groups of the 2-O-sulfo-D-glucuronate residues of chondroitin sulfate, heparin and heparitin sulfate.. Catalyzes the hydrolysis of pseudosubstrates such as p-nitrocatechol sulfate and p-nitrophenyl sulfate. Catalyzes the hydrolysis of the 2-sulfate groups of the 2-O-sulfo-D-glucuronate residues of chondroitin sulfate, heparin and heparitin sulfate. Acts selectively on 2-sulfoglucuronate and lacks activity against 2-sulfoiduronate. This chain is Arylsulfatase K (Arsk), found in Mus musculus (Mouse).